We begin with the raw amino-acid sequence, 144 residues long: Putative sugar phosphate isomerase RT0290 (144 aa).

Position 12 (H12) interacts with substrate. H101 functions as the Proton donor in the catalytic mechanism. Substrate is bound at residue R135.

It belongs to the LacAB/RpiB family.

This chain is Putative sugar phosphate isomerase RT0290, found in Rickettsia typhi (strain ATCC VR-144 / Wilmington).